A 170-amino-acid chain; its full sequence is Nicotinamide-nucleotide adenylyltransferase (170 aa).

This sequence belongs to the archaeal NMN adenylyltransferase family.

Its subcellular location is the cytoplasm. The enzyme catalyses beta-nicotinamide D-ribonucleotide + ATP + H(+) = diphosphate + NAD(+). It participates in cofactor biosynthesis; NAD(+) biosynthesis; NAD(+) from nicotinamide D-ribonucleotide: step 1/1. This Methanothrix thermoacetophila (strain DSM 6194 / JCM 14653 / NBRC 101360 / PT) (Methanosaeta thermophila) protein is Nicotinamide-nucleotide adenylyltransferase.